We begin with the raw amino-acid sequence, 111 residues long: DNA-binding protein MTH_1615 (111 aa).

It belongs to the PDCD5 family.

Functionally, DNA-binding protein which can interact with a randomly chosen 20-mer of double-stranded DNA. This Methanothermobacter thermautotrophicus (strain ATCC 29096 / DSM 1053 / JCM 10044 / NBRC 100330 / Delta H) (Methanobacterium thermoautotrophicum) protein is DNA-binding protein MTH_1615.